A 128-amino-acid polypeptide reads, in one-letter code: UPF0325 protein NT01EI_0832 (128 aa).

This sequence belongs to the UPF0325 family.

This Edwardsiella ictaluri (strain 93-146) protein is UPF0325 protein NT01EI_0832.